The sequence spans 58 residues: Protein translocase subunit SecE (58 aa).

A helical membrane pass occupies residues 38–58; the sequence is IVMAFVGLLAYLIQLVLAFII.

This sequence belongs to the SecE/SEC61-gamma family. In terms of assembly, component of the Sec protein translocase complex. Heterotrimer consisting of SecY (alpha), SecG (beta) and SecE (gamma) subunits. The heterotrimers can form oligomers, although 1 heterotrimer is thought to be able to translocate proteins. Interacts with the ribosome. May interact with SecDF, and other proteins may be involved.

The protein resides in the cell membrane. In terms of biological role, essential subunit of the Sec protein translocation channel SecYEG. Clamps together the 2 halves of SecY. May contact the channel plug during translocation. The protein is Protein translocase subunit SecE of Acidianus ambivalens (Desulfurolobus ambivalens).